Reading from the N-terminus, the 725-residue chain is MLAQESILETTVQTETESVTTETSQTVANLESETTSQTVMQEKESSSAIAESSSRNVVAVTTETTNEIQNSGTDGKAVSAESVFSEADYKQATALELATLVREKKVTSEELVKIALAITKRENPTLNAVITLREEAALTEAKALQDTGQPFLGVPLLLKGLGQSLKGESNTNGFGFLRDQVAGGTSTFVKALQNAGFIIIGQTNYPELGWKNISDSKLYGVSVNPWNPNHYSGGSSGGAGASVAAAFVPIASGSDAGGSIRIPASWTGTVGLKPSRGVIIGNSNSAKGQTVHFGLSRTVADTNALFETLLTKKDLPAGHLSQAQPIAYTTESPAGTPVSAEAKEAVAEAVAFLKDQGYTLVEVKHPVDGERLMKNYYTVAAGSAGIADFMARQKLKRPLERNDVELLTWALFQTGKNITSEETTAAWTDIALQAQAMDEFYQQYPILLTPTTAATAPSIDNPLLKPEHAAQMEKIDQLSPAEQKQLIYDQWLTAFTYTPFTQQANLFGHPALSVPTYVSKEGLPLGIQFNSALNEDRTLLQLGALFENNHKINQPHVEEPDKDKEPDASGEPEKDKDPNASGEPDKDKEPDASGEPDKDKEPDASGEPDKDKEPDASGKPDKDKETKTSEGPIEGKDQNQNPDKAGKTTSGSSLDNSLNSSANQGTKSTESTHAFSNKSMIGKQEQLPKKVLPKAGAEVPSTFWIVLGGAFLVTSGTIYIRKTRK.

The interval 1–52 (MLAQESILETTVQTETESVTTETSQTVANLESETTSQTVMQEKESSSAIAES) is disordered. Residues 9-27 (ETTVQTETESVTTETSQTV) are compositionally biased toward low complexity. The segment covering 28-40 (ANLESETTSQTVM) has biased composition (polar residues). Residues K159 and S235 each act as charge relay system in the active site. Catalysis depends on S259, which acts as the Acyl-ester intermediate. The disordered stretch occupies residues 551–686 (KINQPHVEEP…NKSMIGKQEQ (136 aa)). Over residues 556 to 637 (HVEEPDKDKE…TSEGPIEGKD (82 aa)) the composition is skewed to basic and acidic residues. Low complexity predominate over residues 650–661 (SGSSLDNSLNSS). Residues 662 to 679 (ANQGTKSTESTHAFSNKS) show a composition bias toward polar residues. A helical transmembrane segment spans residues 700-720 (PSTFWIVLGGAFLVTSGTIYI).

It belongs to the amidase family. As to quaternary structure, homodimer in solution.

Its subcellular location is the cell membrane. It carries out the reaction N(6)-[(R)-lipoyl]-L-lysyl-[lipoyl-carrier protein] + H2O = L-lysyl-[lipoyl-carrier protein] + (R)-lipoate. Lipoamidase activity is slightly inhibited by p-chloromercuribenzoate. In terms of biological role, amidohydrolase that releases lipoic acid from the protein-bound form. Cleaves the amide bond that links lipoic acid to the lipoylated lysine epsilon-amino groups, leading to the formation of free lipoic acid plus the unmodified protein. Shows activity toward both high molecular weight protein substrates such as a lipoyl domain and intact 2-oxoacid dehydrogenases as well as small molecule substrates such as lipoyl-lysine. Also acts on small biotinylated substrates. Hydrolyzes the synthetic substrates methyl lipoate and lipoamide. The physiologically important substrates are probably lipoyl-lysine and small peptides containing lipoyl-lysine. Lpa seems likely to enable this bacterium to utilize amide-linked forms of lipoic acid that otherwise could not be assimilated. The polypeptide is Lipoamidase (Enterococcus faecalis (Streptococcus faecalis)).